A 450-amino-acid polypeptide reads, in one-letter code: Bestrophin homolog 1 (450 aa).

The Cytoplasmic segment spans residues M1–A31. Residues V32 to K51 traverse the membrane as a helical segment. At T52–R60 the chain is on the extracellular side. A helical transmembrane segment spans residues T61–L82. Over G83–P242 the chain is Cytoplasmic. A helical membrane pass occupies residues Q243–R260. At Q261–P278 the chain is on the extracellular side. A helical transmembrane segment spans residues V279–L292. Over K293 to F450 the chain is Cytoplasmic. Ca(2+) is bound by residues N300, D305, and D308.

It belongs to the anion channel-forming bestrophin (TC 1.A.46) family. Calcium-sensitive chloride channel subfamily. As to quaternary structure, forms oligomers.

It is found in the cell membrane. The catalysed reaction is chloride(in) = chloride(out). Functionally, ligand-gated anion channel that allows the movement of chloride monoatomic anions across cell membranes when activated by Calcium (Ca2+). In Caenorhabditis elegans, this protein is Bestrophin homolog 1 (best-1).